Reading from the N-terminus, the 3707-residue chain is CUB and sushi domain-containing protein 3 (3707 aa).

The segment at 1–21 (MKGIRKGESRAKESKPWEPGK) is disordered. At 1–42 (MKGIRKGESRAKESKPWEPGKRRCAKCGRLDFILMKKMGIKS) the chain is on the cytoplasmic side. The helical transmembrane segment at 43–63 (GFTFWNLVFLLTVSCVKGFIY) threads the bilayer. Over 64–3630 (TCGGTLKGLN…NQPHGTNSSS (3567 aa)) the chain is Extracellular. Intrachain disulfides connect Cys65–Cys91, Cys178–Cys218, Cys204–Cys235, and Cys241–Cys267. Positions 65–173 (CGGTLKGLNG…HGFKVYYEEL (109 aa)) constitute a CUB 1 domain. N-linked (GlcNAc...) asparagine glycans are attached at residues Asn73 and Asn90. The 62-residue stretch at 176–237 (SSCGNPGVPP…WDFPVPICRA (62 aa)) folds into the Sushi 1 domain. The CUB 2 domain maps to 241–345 (CGGTMRGSSG…RGFSAPYQGS (105 aa)). N-linked (GlcNAc...) asparagine glycosylation is found at Asn361 and Asn409. The segment at 394-435 (QRVQVTSLRNSGLDPNTSKDGLSPHPADTQSTRRRPRHAEQI) is disordered. Polar residues predominate over residues 396 to 413 (VQVTSLRNSGLDPNTSKD). Residues 484–545 (NLCPDPGEPE…WSDHRPVCKV (62 aa)) enclose the Sushi 2 domain. Intrachain disulfides connect Cys486/Cys526, Cys512/Cys543, Cys548/Cys574, Cys664/Cys704, Cys690/Cys717, and Cys721/Cys747. Residues 548–659 (CGSNLQGPSG…VGFKVNYKEI (112 aa)) form the CUB 3 domain. The 58-residue stretch at 662–719 (ESCGDPGTPLYGIREGDGFSNRDVLRFECQFGFELIGEKSIVCQENNQWSANIPICIF) folds into the Sushi 3 domain. One can recognise a CUB 4 domain in the interval 721–829 (CLSNFTAPMG…RGFNITYNTF (109 aa)). N-linked (GlcNAc...) asparagine glycosylation is found at Asn724 and Asn823. One can recognise a Sushi 4 domain in the interval 832 to 893 (NECPDPGIPI…WSGLIPKCGA (62 aa)). 3 cysteine pairs are disulfide-bonded: Cys834–Cys875, Cys860–Cys891, and Cys895–Cys921. The 109-residue stretch at 895–1003 (CGGHFSAPSG…NGFKIHYESV (109 aa)) folds into the CUB 5 domain. Asn966 carries N-linked (GlcNAc...) asparagine glycosylation. Residues 1008-1065 (YSCLDPGIPVHGRRYGHDFSIGSTVSFSCDSGYRLSHEEPLLCEKNHWWSHPLPTCDA) form the Sushi 5 domain. 3 disulfides stabilise this stretch: Cys1010–Cys1050, Cys1036–Cys1063, and Cys1067–Cys1093. In terms of domain architecture, CUB 6 spans 1067–1177 (CGGDVRGPSG…EGFNITFSEY (111 aa)). Residues Asn1092, Asn1126, and Asn1171 are each glycosylated (N-linked (GlcNAc...) asparagine). A Sushi 6 domain is found at 1180–1239 (EPCEDPGIPQYGSRIGFNFGIGDTLTFSCSSGYRLEGTSEIICLGGGRRVWSAPLPRCVA). Cystine bridges form between Cys1182–Cys1222, Cys1208–Cys1237, and Cys1241–Cys1267. The CUB 7 domain maps to 1241–1349 (CGASATNNEG…EGFQLVYTSF (109 aa)). Residue Asn1280 is glycosylated (N-linked (GlcNAc...) asparagine). One can recognise a Sushi 7 domain in the interval 1352 to 1412 (SHCEDPGIPQ…WDYPLPSCIA (61 aa)). 12 cysteine pairs are disulfide-bonded: Cys1354/Cys1395, Cys1381/Cys1410, Cys1414/Cys1441, Cys1528/Cys1568, Cys1554/Cys1584, Cys1588/Cys1614, Cys1701/Cys1741, Cys1727/Cys1758, Cys1762/Cys1788, Cys1878/Cys1918, Cys1904/Cys1935, and Cys1939/Cys1965. The CUB 8 domain maps to 1414 to 1523 (CGGRFKGESS…SGFAIQFSSS (110 aa)). The Sushi 8 domain maps to 1526–1586 (TACRDPGVPM…WQPSPPVCIA (61 aa)). Asn1536 carries N-linked (GlcNAc...) asparagine glycosylation. A CUB 9 domain is found at 1588–1696 (CGGNLTGSSG…TGFHLEYKAK (109 aa)). N-linked (GlcNAc...) asparagine glycosylation is found at Asn1591 and Asn1709. A Sushi 9 domain is found at 1699–1760 (ESCFDPGNIM…WNRALPSCHA (62 aa)). Residues 1762–1870 (CGSRSTGSEG…KGFHFVYQAV (109 aa)) enclose the CUB 10 domain. An N-linked (GlcNAc...) asparagine glycan is attached at Asn1781. The 62-residue stretch at 1876–1937 (TQCSSVPEPR…WNDSLPTCIV (62 aa)) folds into the Sushi 10 domain. Asn1929 carries an N-linked (GlcNAc...) asparagine glycan. The CUB 11 domain occupies 1939-2047 (CGGILTKRKG…AGFHLEYTAI (109 aa)). The N-linked (GlcNAc...) asparagine glycan is linked to Asn2019. One can recognise a Sushi 11 domain in the interval 2050 to 2109 (DSCPEPQTPSSGIKIGDRYMVGDVVSFQCDQGYSLQGHSHITCMPGPVRRWNYPIPICLA). 3 cysteine pairs are disulfide-bonded: Cys2052-Cys2092, Cys2078-Cys2107, and Cys2111-Cys2137. One can recognise a CUB 12 domain in the interval 2111-2219 (CGGAMSDFSG…QGFHIVYQAY (109 aa)). Asn2155 carries an N-linked (GlcNAc...) asparagine glycan. The 60-residue stretch at 2222–2281 (QSCPDPRPFRNGFVIGNDFTVGQTISFECFPGYTLIGNSALTCLHGVSRNWNHPLPRCEA) folds into the Sushi 12 domain. 3 disulfides stabilise this stretch: Cys2224-Cys2264, Cys2250-Cys2279, and Cys2283-Cys2309. A CUB 13 domain is found at 2283 to 2394 (CGGNITAMNG…LSYHAYQLRV (112 aa)). N-linked (GlcNAc...) asparagine glycosylation is found at Asn2286, Asn2291, and Asn2324. The Sushi 13 domain maps to 2393–2454 (RVCQPPPPVP…MDGAPPVCQV (62 aa)). Disulfide bonds link Cys2395–Cys2437, Cys2423–Cys2452, and Cys2456–Cys2484. The 112-residue stretch at 2456–2567 (CPANELRLDS…KGFRIRYIAF (112 aa)) folds into the CUB 14 domain. Asn2495 and Asn2537 each carry an N-linked (GlcNAc...) asparagine glycan. Sushi domains lie at 2567-2629 (FYCS…ACQA), 2630-2691 (ISCG…RCVV), 2692-2756 (VTCP…YCQI), 2757-2814 (ISCG…RCLA), 2815-2872 (GHCG…SCVP), 2873-2930 (VSCG…MCKV), 2931-2992 (VNCS…ECIM), 2993-3050 (IDCG…HCSG), 3054-3111 (GTCG…ECKA), 3112-3170 (VQCG…NCTI), 3171-3230 (ISCG…TCRA), 3231-3288 (VTCP…QCLP), 3289-3346 (KFCG…HCIE), 3350-3408 (TSCE…ECIP), and 3409-3468 (HSCK…ICEA). 12 disulfide bridges follow: Cys2569–Cys2610, Cys2596–Cys2627, Cys2632–Cys2674, Cys2658–Cys2689, Cys2694–Cys2739, Cys2725–Cys2754, Cys2759–Cys2799, Cys2785–Cys2812, Cys2817–Cys2857, Cys2843–Cys2870, Cys2875–Cys2915, and Cys2901–Cys2928. N-linked (GlcNAc...) asparagine glycosylation is found at Asn2711 and Asn2742. The N-linked (GlcNAc...) asparagine glycan is linked to Asn2862. Asn2932 and Asn2952 each carry an N-linked (GlcNAc...) asparagine glycan. Cystine bridges form between Cys2933–Cys2977, Cys2963–Cys2990, Cys2995–Cys3035, Cys3021–Cys3048, Cys3056–Cys3096, Cys3082–Cys3109, Cys3114–Cys3155, Cys3141–Cys3168, Cys3173–Cys3215, Cys3199–Cys3228, Cys3233–Cys3273, Cys3259–Cys3286, Cys3291–Cys3331, Cys3317–Cys3344, Cys3352–Cys3393, Cys3379–Cys3406, Cys3411–Cys3453, and Cys3438–Cys3466. A glycan (N-linked (GlcNAc...) asparagine) is linked at Asn3099. N-linked (GlcNAc...) asparagine glycosylation is found at Asn3158, Asn3167, Asn3194, Asn3208, and Asn3218. Residue Asn3276 is glycosylated (N-linked (GlcNAc...) asparagine). N-linked (GlcNAc...) asparagine glycosylation occurs at Asn3364. Residues Asn3522, Asn3529, Asn3612, Asn3618, and Asn3627 are each glycosylated (N-linked (GlcNAc...) asparagine). The helical transmembrane segment at 3631–3651 (VAIAILVPFFALIFAGFGFYL) threads the bilayer. Residues 3652–3707 (YKQRTAPKTQYTGCSVHENNNGQAAFENPMYDTNAKSVEGKAVRFDPNLNTVCTMV) are Cytoplasmic-facing.

Belongs to the CSMD family. In terms of tissue distribution, weakly expressed in most tissues, except in brain. Expressed at intermediate level in brain, including cerebellum, substantia nigra, thalamus, spinal cord, hippocampus and fetal brain. Also expressed in testis.

The protein localises to the cell membrane. In terms of biological role, involved in dendrite development. This chain is CUB and sushi domain-containing protein 3 (CSMD3), found in Homo sapiens (Human).